Consider the following 500-residue polypeptide: Signal transduction histidine-protein kinase/phosphatase UhpB (500 aa).

Transmembrane regions (helical) follow at residues 8–28 (LITVVACFFIFSAAWFCLWSI), 78–98 (VALAHLPLLMIGSVLTLLPVA), 112–132 (LLLQGAALTAAALLQSLPWLG), 140–160 (ALLLTLTGGLTLAPICLVFWH), 185–205 (HLIWYLLLFIVSLWLQLGLPA), 207–224 (LSRFTPFCLALPIIALAW), 231–249 (ALIATLMNAIALIASQTWH), and 253–273 (VDLLLSLLAQSLTGLLLGAGI). Over 274-500 (QRLRELNQSL…VSVSLPQRYV (227 aa)) the chain is Cytoplasmic. In terms of domain architecture, Histidine kinase spans 311–499 (ELHDDIGQTI…RVSVSLPQRY (189 aa)). Phosphohistidine; by autocatalysis is present on histidine 313.

Autophosphorylated.

The protein localises to the cell inner membrane. The catalysed reaction is ATP + protein L-histidine = ADP + protein N-phospho-L-histidine.. Part of the UhpABC signaling cascade that controls the expression of the hexose phosphate transporter UhpT. UhpB functions as a membrane-associated protein kinase that autophosphorylates in response to interaction with UhpC, and subsequently transfers its phosphate group to the response regulator UhpA. Can also dephosphorylate UhpA. In Salmonella typhimurium (strain LT2 / SGSC1412 / ATCC 700720), this protein is Signal transduction histidine-protein kinase/phosphatase UhpB (uhpB).